A 459-amino-acid chain; its full sequence is Bifunctional protein GlmU (459 aa).

The tract at residues 1 to 229 is pyrophosphorylase; sequence MSNFAIILAA…FDESLGVNDR (229 aa). Residues 8 to 11, Lys22, Gln72, and 77 to 78 each bind UDP-N-acetyl-alpha-D-glucosamine; these read LAAG and GT. Asp102 lines the Mg(2+) pocket. UDP-N-acetyl-alpha-D-glucosamine is bound by residues Gly139, Glu154, Asn169, and Asn227. Asn227 is a Mg(2+) binding site. The segment at 230-250 is linker; that stretch reads VALATAESVMRRRINHKHMVN. Positions 251-459 are N-acetyltransferase; that stretch reads GVSFVNPEAT…TRLPHHPKNQ (209 aa). The UDP-N-acetyl-alpha-D-glucosamine site is built by Arg332 and Lys350. Residue His362 is the Proton acceptor of the active site. UDP-N-acetyl-alpha-D-glucosamine is bound by residues Tyr365 and Asn376. Residues Ala379, 385–386, Ser404, Ala422, and Arg439 contribute to the acetyl-CoA site; that span reads NY.

This sequence in the N-terminal section; belongs to the N-acetylglucosamine-1-phosphate uridyltransferase family. The protein in the C-terminal section; belongs to the transferase hexapeptide repeat family. Homotrimer. It depends on Mg(2+) as a cofactor.

It is found in the cytoplasm. It catalyses the reaction alpha-D-glucosamine 1-phosphate + acetyl-CoA = N-acetyl-alpha-D-glucosamine 1-phosphate + CoA + H(+). The enzyme catalyses N-acetyl-alpha-D-glucosamine 1-phosphate + UTP + H(+) = UDP-N-acetyl-alpha-D-glucosamine + diphosphate. The protein operates within nucleotide-sugar biosynthesis; UDP-N-acetyl-alpha-D-glucosamine biosynthesis; N-acetyl-alpha-D-glucosamine 1-phosphate from alpha-D-glucosamine 6-phosphate (route II): step 2/2. It functions in the pathway nucleotide-sugar biosynthesis; UDP-N-acetyl-alpha-D-glucosamine biosynthesis; UDP-N-acetyl-alpha-D-glucosamine from N-acetyl-alpha-D-glucosamine 1-phosphate: step 1/1. It participates in bacterial outer membrane biogenesis; LPS lipid A biosynthesis. Its function is as follows. Catalyzes the last two sequential reactions in the de novo biosynthetic pathway for UDP-N-acetylglucosamine (UDP-GlcNAc). The C-terminal domain catalyzes the transfer of acetyl group from acetyl coenzyme A to glucosamine-1-phosphate (GlcN-1-P) to produce N-acetylglucosamine-1-phosphate (GlcNAc-1-P), which is converted into UDP-GlcNAc by the transfer of uridine 5-monophosphate (from uridine 5-triphosphate), a reaction catalyzed by the N-terminal domain. This Streptococcus pneumoniae (strain JJA) protein is Bifunctional protein GlmU.